The chain runs to 387 residues: Alpha-sarcoglycan (387 aa).

The first 23 residues, 1–23 (MAETLFWTPLLVVLLAGLGDTEA), serve as a signal peptide directing secretion. Residues 24 to 290 (QQTTLHPLVG…APDRDFLVDA (267 aa)) are Extracellular-facing. 2 N-linked (GlcNAc...) asparagine glycosylation sites follow: N174 and N246. Residues 291–311 (LVTLLVPLLVALLLTLLLAYV) traverse the membrane as a helical segment. Residues 312-387 (MCCRREGRLK…AQVPLILDQH (76 aa)) are Cytoplasmic-facing. S377 carries the post-translational modification Phosphoserine.

It belongs to the sarcoglycan alpha/epsilon family. As to quaternary structure, interacts with the syntrophin SNTA1. Cross-link to form 2 major subcomplexes: one consisting of SGCB, SGCD and SGCG and the other consisting of SGCB and SGCD. The association between SGCB and SGCG is particularly strong while SGCA is loosely associated with the other sarcoglycans. Most strongly expressed in skeletal muscle. Also expressed in cardiac muscle and, at much lower levels, in lung. In the fetus, most abundant in cardiac muscle and, at lower levels, in lung. Also detected in liver and kidney. Not expressed in brain.

The protein resides in the cell membrane. It is found in the sarcolemma. Its subcellular location is the cytoplasm. The protein localises to the cytoskeleton. Component of the sarcoglycan complex, a subcomplex of the dystrophin-glycoprotein complex which forms a link between the F-actin cytoskeleton and the extracellular matrix. This chain is Alpha-sarcoglycan (SGCA), found in Homo sapiens (Human).